The sequence spans 286 residues: Shikimate dehydrogenase (NADP(+)) (286 aa).

Shikimate-binding positions include 20 to 22 (SLS) and S67. Residue K71 is the Proton acceptor of the active site. Residues N92 and D107 each coordinate shikimate. NADP(+) contacts are provided by residues 131-135 (GGGGA) and A230. Y232 serves as a coordination point for shikimate. Residue G253 participates in NADP(+) binding.

This sequence belongs to the shikimate dehydrogenase family. Homodimer.

The catalysed reaction is shikimate + NADP(+) = 3-dehydroshikimate + NADPH + H(+). The protein operates within metabolic intermediate biosynthesis; chorismate biosynthesis; chorismate from D-erythrose 4-phosphate and phosphoenolpyruvate: step 4/7. Involved in the biosynthesis of the chorismate, which leads to the biosynthesis of aromatic amino acids. Catalyzes the reversible NADPH linked reduction of 3-dehydroshikimate (DHSA) to yield shikimate (SA). This is Shikimate dehydrogenase (NADP(+)) from Lactococcus lactis subsp. cremoris (strain MG1363).